Consider the following 427-residue polypeptide: Probable glucuronosyltransferase Os03g0107900 (427 aa).

Topologically, residues 1 to 33 (MAMRGDPKQRRASASAPHGGAAHHVADKLRRHS) are cytoplasmic. Residues 34–54 (TFLLLLLLLWFALSLYLFLSA) traverse the membrane as a helical; Signal-anchor for type II membrane protein segment. The Lumenal portion of the chain corresponds to 55 to 427 (TPPPPRPAFL…QRRHVESWKR (373 aa)). Residues Asn-136, Asn-168, Asn-264, and Asn-374 are each glycosylated (N-linked (GlcNAc...) asparagine).

This sequence belongs to the glycosyltransferase 47 family.

The protein localises to the golgi apparatus membrane. In terms of biological role, involved in the synthesis of glucuronoxylan hemicellulose in secondary cell walls. This is Probable glucuronosyltransferase Os03g0107900 from Oryza sativa subsp. japonica (Rice).